A 185-amino-acid polypeptide reads, in one-letter code: NADH-quinone oxidoreductase subunit B (185 aa).

The [4Fe-4S] cluster site is built by Cys-64, Cys-65, Cys-129, and Cys-159.

Belongs to the complex I 20 kDa subunit family. As to quaternary structure, NDH-1 is composed of 14 different subunits. Subunits NuoB, C, D, E, F, and G constitute the peripheral sector of the complex. Requires [4Fe-4S] cluster as cofactor.

The protein localises to the cell inner membrane. The catalysed reaction is a quinone + NADH + 5 H(+)(in) = a quinol + NAD(+) + 4 H(+)(out). NDH-1 shuttles electrons from NADH, via FMN and iron-sulfur (Fe-S) centers, to quinones in the respiratory chain. Couples the redox reaction to proton translocation (for every two electrons transferred, four hydrogen ions are translocated across the cytoplasmic membrane), and thus conserves the redox energy in a proton gradient. In Rhodospirillum rubrum (strain ATCC 11170 / ATH 1.1.1 / DSM 467 / LMG 4362 / NCIMB 8255 / S1), this protein is NADH-quinone oxidoreductase subunit B.